Consider the following 297-residue polypeptide: Phosphoribosylaminoimidazole-succinocarboxamide synthase (297 aa).

The protein belongs to the SAICAR synthetase family.

The catalysed reaction is 5-amino-1-(5-phospho-D-ribosyl)imidazole-4-carboxylate + L-aspartate + ATP = (2S)-2-[5-amino-1-(5-phospho-beta-D-ribosyl)imidazole-4-carboxamido]succinate + ADP + phosphate + 2 H(+). It participates in purine metabolism; IMP biosynthesis via de novo pathway; 5-amino-1-(5-phospho-D-ribosyl)imidazole-4-carboxamide from 5-amino-1-(5-phospho-D-ribosyl)imidazole-4-carboxylate: step 1/2. In Methylobacillus flagellatus (strain ATCC 51484 / DSM 6875 / VKM B-1610 / KT), this protein is Phosphoribosylaminoimidazole-succinocarboxamide synthase.